Reading from the N-terminus, the 89-residue chain is Small ribosomal subunit protein uS15 (89 aa).

It belongs to the universal ribosomal protein uS15 family. As to quaternary structure, part of the 30S ribosomal subunit. Forms a bridge to the 50S subunit in the 70S ribosome, contacting the 23S rRNA.

Its function is as follows. One of the primary rRNA binding proteins, it binds directly to 16S rRNA where it helps nucleate assembly of the platform of the 30S subunit by binding and bridging several RNA helices of the 16S rRNA. In terms of biological role, forms an intersubunit bridge (bridge B4) with the 23S rRNA of the 50S subunit in the ribosome. The chain is Small ribosomal subunit protein uS15 from Shouchella clausii (strain KSM-K16) (Alkalihalobacillus clausii).